The sequence spans 357 residues: Alternative oxidase, mitochondrial (357 aa).

A helical transmembrane segment spans residues 152 to 172; sequence LTRCIFLESIAGVPGAVASFI. Glu-159, Glu-198, and His-201 together coordinate Fe cation. Residues 218 to 238 form a helical membrane-spanning segment; the sequence is IIYVGQGVFCNLFFLFYLANP. Fe cation contacts are provided by Glu-249, Glu-304, and His-307. Positions 330 to 357 are disordered; it reads IPDLKEPQPESGLKVTKPHGWEKEELKL. Residues 348–357 are compositionally biased toward basic and acidic residues; the sequence is HGWEKEELKL.

The protein belongs to the alternative oxidase family. Fe cation serves as cofactor.

It localises to the mitochondrion inner membrane. In terms of biological role, catalyzes cyanide-resistant oxygen consumption. May increase respiration when the cytochrome respiratory pathway is restricted, or in response to low temperatures. The chain is Alternative oxidase, mitochondrial (STO1) from Scheffersomyces stipitis (strain ATCC 58785 / CBS 6054 / NBRC 10063 / NRRL Y-11545) (Yeast).